The sequence spans 118 residues: MSYRQMLIHRCDIYHEAAQAPSAGRFGIPADRLQPVISYPDTPDEQDVPCYFTEKTQQLIQEEPDQTVYHSFLVHFPLSADIRVNDKIIWENHKYILKLPKRIRHHHWEVVAVRDESL.

To B.subtilis YqbH.

The chain is Phage-like element PBSX protein XkdH (xkdH) from Bacillus subtilis (strain 168).